A 329-amino-acid chain; its full sequence is MDAIDFVKKNTEEIVTMDEAFKALNNNPKGYIGFEPSGNPHLGTCLLLANKINDMVNAGIKMTVLLADWHAMVNDKLNGDLNEIRKSGELFKRAWLAAGLNSNVKFVWASELVEKSDYWSLLLKVAKNASLLRIRRSLPIMGRSEEDADRDFSKYIYPLMQVTDIFYLDVDFALGGMDQRHAHMLARDIAERMNIKKPVSVHTPLLSSLKGSGRMDSFKKMSKSEPDSAIFMTDSNDDIKRKIKNAYCPMKEVNGNPVIDILKYIIFPYYNDKISIKRPESKGGPVDVDMDSLTRMYISGEIHPVDLKNAVGELLCDIIGPVREKLTGD.

L-tyrosine-binding residues include tyrosine 31, tyrosine 157, glutamine 161, aspartate 164, and glutamine 179. Residues 220–224 (KMSKS) carry the 'KMSKS' region motif. Lysine 223 is an ATP binding site.

The protein belongs to the class-I aminoacyl-tRNA synthetase family. TyrS type 4 subfamily. Homodimer.

It is found in the cytoplasm. The enzyme catalyses tRNA(Tyr) + L-tyrosine + ATP = L-tyrosyl-tRNA(Tyr) + AMP + diphosphate + H(+). In terms of biological role, catalyzes the attachment of tyrosine to tRNA(Tyr) in a two-step reaction: tyrosine is first activated by ATP to form Tyr-AMP and then transferred to the acceptor end of tRNA(Tyr). The chain is Tyrosine--tRNA ligase from Picrophilus torridus (strain ATCC 700027 / DSM 9790 / JCM 10055 / NBRC 100828 / KAW 2/3).